A 1585-amino-acid polypeptide reads, in one-letter code: Sterol 3-beta-glucosyltransferase (1585 aa).

The span at Met1–Pro18 shows a compositional bias: pro residues. Disordered stretches follow at residues Met1–Arg154, Pro177–Thr225, and Tyr249–Gly279. Polar residues-rich tracts occupy residues Asp65–Pro77, Asp105–Glu123, and Pro132–Glu148. Positions Trp178–Ile194 are enriched in acidic residues. Residues Glu255–Glu273 show a composition bias toward low complexity. The GRAM 1 domain maps to Glu387–Pro555. The 93-residue stretch at Leu438 to Phe530 folds into the PH domain. 2 disordered regions span residues Thr625–Ala645 and Asp666–Ser852. Over residues Leu670–His689 the composition is skewed to basic and acidic residues. 3 stretches are compositionally biased toward polar residues: residues Thr760–Val785, Asn806–Glu817, and Ser827–Lys840. One can recognise a GRAM 2 domain in the interval Arg862–Lys933. UDP-alpha-D-glucose contacts are provided by Ser1043, Arg1044, Asp1046, Ile1358, His1360, His1373, Gly1377, Thr1378, Asp1397, and Gln1398. The tract at residues Asn1499–Ile1555 is disordered. The segment covering Ser1529–Val1545 has biased composition (low complexity).

It belongs to the glycosyltransferase 28 family.

It is found in the cytoplasm. The protein resides in the membrane. It carries out the reaction a sterol + UDP-alpha-D-glucose = a sterol 3-beta-D-glucoside + UDP + H(+). It catalyses the reaction ergosterol + UDP-alpha-D-glucose = ergosteryl 3-beta-D-glucoside + UDP + H(+). In terms of biological role, sterol glycosyltransferase responsible for the glycosylation of ergosterol to form ergosterol-glucoside. The sequence is that of Sterol 3-beta-glucosyltransferase from Cryptococcus neoformans var. neoformans serotype D (strain JEC21 / ATCC MYA-565) (Filobasidiella neoformans).